The chain runs to 667 residues: MKMPSFGYEVEKSFLPVDGRKRIVIERIFPSVDCSDFPLKRVIGQTMVVRAYVFADGHERISVHLAYRHIADSQWTEISMEELGNDEWEASFPLEKLGIYEVKIIGWIDHFQNWLEKLHKLAENDKDIAVELSIGIGLLEKNWAFSRSQELKDWIDRLKDERLSLHQRLQLIKNPYLEELVQKNPDRSLSVESESPLFIFVERSKAQFSSWYEFFPRSWSSVPGKHGTFKECERLLPDIAAMGFDVVYLPPIHPIGKKARKGKNNALIASPEDVGSPWAIGSAEGGHKSIHPSLGSLEDFRHFVKKAADYGIEVALDIAFQCSPDHPYLLEHPAWFKWRPDGTVQYAENPPKKYEDIVPFDFETEDWQALWEELKSIFVFWINQGVKIFRVDNPHTKPLAFWRWVIWEIKRDYPDTLFLSEAFTRPKLLYGLAKRGFSQSYTYFTWRSEASEIKAYMEELTSPPVVEFFRPNFWPNTPDILAGYLQYAPPSVFKMRHVLAATLSSNYGIYGPAFELCVNIPLEPGKEEYKDSEKYEIKTWDWNAPGNIKEFIAKVNHIRKLHPALQRTENIRFIQGDNPRLLAYVKELPGHGDPLLIVVNMSRNTEMGWIHFQPESVGLDPSKPYQLTDLLADVTYTWHGEWNFVKLDPEACPAHLFQLSQDGSFSP.

3 residues coordinate alpha-maltose 1-phosphate: lysine 261, glutamine 321, and aspartate 356. Aspartate 392 acts as the Nucleophile in catalysis. Asparagine 393 is an alpha-maltose 1-phosphate binding site. Glutamate 421 (proton donor) is an active-site residue. Lysine 534–tyrosine 535 is an alpha-maltose 1-phosphate binding site.

This sequence belongs to the glycosyl hydrolase 13 family. GlgE subfamily. Homodimer.

The catalysed reaction is alpha-maltose 1-phosphate + [(1-&gt;4)-alpha-D-glucosyl](n) = [(1-&gt;4)-alpha-D-glucosyl](n+2) + phosphate. Its function is as follows. Maltosyltransferase that uses maltose 1-phosphate (M1P) as the sugar donor to elongate linear or branched alpha-(1-&gt;4)-glucans. Is involved in a branched alpha-glucan biosynthetic pathway from trehalose, together with TreS, Mak and GlgB. The polypeptide is Alpha-1,4-glucan:maltose-1-phosphate maltosyltransferase (Methylacidiphilum infernorum (isolate V4) (Methylokorus infernorum (strain V4))).